The chain runs to 99 residues: Mu-hexatoxin-Mg1c (99 aa).

Intrachain disulfides connect cysteine 61–cysteine 75, cysteine 68–cysteine 80, and cysteine 74–cysteine 94.

The protein belongs to the neurotoxin 14 (magi-1) family. 09 (magi-1) subfamily. As to expression, expressed by the venom gland.

Its subcellular location is the secreted. Functionally, inhibits voltage-gated sodium channels by binding to site 3. Insecticidal neurotoxin. The chain is Mu-hexatoxin-Mg1c from Macrothele gigas (Japanese funnel web spider).